Consider the following 606-residue polypeptide: Urocanate reductase (606 aa).

A signal peptide (tat-type signal) is located at residues 1–40 (MSNLSRRNFITGGAIAALGGTLAIAGCAPKGESSSTVAGA). Thr111 carries the post-translational modification FMN phosphoryl threonine. FAD contacts are provided by Ala163, Glu182, Thr191, Gly195, Gly196, Ala197, Ala305, and Asp373. Catalysis depends on Arg433, which acts as the Proton donor. The FAD site is built by Glu572 and Ile588.

The protein belongs to the FAD-dependent oxidoreductase 2 family. FRD/SDH subfamily. FAD is required as a cofactor. The cofactor is FMN. Predicted to be exported by the Tat system. The position of the signal peptide cleavage has not been experimentally proven.

The enzyme catalyses dihydrourocanate + A = urocanate + AH2. In terms of biological role, catalyzes the two-electron reduction of urocanate to dihydrourocanate (also named imidazole propionate or deamino-histidine). Dihydrourocanate is present at higher concentrations in subjects with type 2 diabetes, and directly impairs glucose tolerance and insulin signaling at the level of insulin receptor substrate (IRS) through activation of p38 gamma (MAPK12)-p62-mTORC1. Therefore, the UrdA enzyme from the gut bacteria E.lenta strain DSM 2243 may contribute to the pathogenesis of type 2 diabetes by producing the microbial metabolite dihydrourocanate. The sequence is that of Urocanate reductase from Eggerthella lenta (strain ATCC 25559 / DSM 2243 / CCUG 17323 / JCM 9979 / KCTC 3265 / NCTC 11813 / VPI 0255 / 1899 B) (Eubacterium lentum).